A 581-amino-acid chain; its full sequence is Adenine deaminase (581 aa).

It belongs to the metallo-dependent hydrolases superfamily. Adenine deaminase family. The cofactor is Mn(2+).

It catalyses the reaction adenine + H2O + H(+) = hypoxanthine + NH4(+). The chain is Adenine deaminase from Brucella suis biovar 1 (strain 1330).